The following is a 196-amino-acid chain: Pyridoxal 5'-phosphate synthase subunit PdxT (196 aa).

Residue 56–58 (GES) participates in L-glutamine binding. Cys85 functions as the Nucleophile in the catalytic mechanism. Residues Arg113 and 141-142 (IR) contribute to the L-glutamine site. Active-site charge relay system residues include His177 and Glu179.

This sequence belongs to the glutaminase PdxT/SNO family. In the presence of PdxS, forms a dodecamer of heterodimers. Only shows activity in the heterodimer.

The enzyme catalyses aldehydo-D-ribose 5-phosphate + D-glyceraldehyde 3-phosphate + L-glutamine = pyridoxal 5'-phosphate + L-glutamate + phosphate + 3 H2O + H(+). The catalysed reaction is L-glutamine + H2O = L-glutamate + NH4(+). The protein operates within cofactor biosynthesis; pyridoxal 5'-phosphate biosynthesis. Functionally, catalyzes the hydrolysis of glutamine to glutamate and ammonia as part of the biosynthesis of pyridoxal 5'-phosphate. The resulting ammonia molecule is channeled to the active site of PdxS. This Methanospirillum hungatei JF-1 (strain ATCC 27890 / DSM 864 / NBRC 100397 / JF-1) protein is Pyridoxal 5'-phosphate synthase subunit PdxT.